The sequence spans 209 residues: MKATISITTIFLVVALAAPSLARPDNHVEDSVGRLLRPGQTYHIVPANPETGGGIFSNSEEICPLDIFQSNNPLDLGLPIKFKSELWFVKEMNSITIEFEAPNWFLCPKESKGWRVVYSEEFKKSLIISTGGSSNPSGFQIHRVDGGAYKIVYCTNISTTTCMNVGIFTDISGARRLALTSDEALLVKFQKAATPKADLKTKLRMFPFY.

The signal sequence occupies residues 1–22 (MKATISITTIFLVVALAAPSLA). Cystine bridges form between Cys-63–Cys-107 and Cys-154–Cys-162. Residue Asn-156 is glycosylated (N-linked (GlcNAc...) asparagine).

Belongs to the protease inhibitor I3 (leguminous Kunitz-type inhibitor) family.

Functionally, exhibits Kunitz trypsin protease inhibitor activity. This chain is Kunitz trypsin inhibitor 1, found in Arabidopsis thaliana (Mouse-ear cress).